A 368-amino-acid chain; its full sequence is 3-dehydroquinate synthase (368 aa).

NAD(+)-binding positions include 112–116 (GVIGD), 136–137 (TT), K149, K158, and 176–179 (TLIT). Residues E191, H256, and H273 each contribute to the Zn(2+) site.

This sequence belongs to the sugar phosphate cyclases superfamily. Dehydroquinate synthase family. Co(2+) serves as cofactor. It depends on Zn(2+) as a cofactor. Requires NAD(+) as cofactor.

The protein localises to the cytoplasm. The enzyme catalyses 7-phospho-2-dehydro-3-deoxy-D-arabino-heptonate = 3-dehydroquinate + phosphate. The protein operates within metabolic intermediate biosynthesis; chorismate biosynthesis; chorismate from D-erythrose 4-phosphate and phosphoenolpyruvate: step 2/7. In terms of biological role, catalyzes the conversion of 3-deoxy-D-arabino-heptulosonate 7-phosphate (DAHP) to dehydroquinate (DHQ). The chain is 3-dehydroquinate synthase from Prochlorococcus marinus (strain NATL2A).